Consider the following 204-residue polypeptide: Ribonuclease HII (204 aa).

Residues 1-197 (MTLGIDEAGR…KNRILNPKLL (197 aa)) form the RNase H type-2 domain. The a divalent metal cation site is built by aspartate 6, glutamate 7, and aspartate 103.

Belongs to the RNase HII family. Requires Mn(2+) as cofactor. The cofactor is Mg(2+).

It localises to the cytoplasm. It carries out the reaction Endonucleolytic cleavage to 5'-phosphomonoester.. Endonuclease that specifically degrades the RNA of RNA-DNA hybrids. The polypeptide is Ribonuclease HII (Helicobacter pylori (strain HPAG1)).